The sequence spans 411 residues: Peptidase T (411 aa).

Zn(2+) is bound at residue histidine 78. Residue aspartate 80 is part of the active site. Aspartate 140 provides a ligand contact to Zn(2+). Glutamate 173 serves as the catalytic Proton acceptor. Zn(2+)-binding residues include glutamate 174, aspartate 196, and histidine 379.

This sequence belongs to the peptidase M20B family. Zn(2+) is required as a cofactor.

It is found in the cytoplasm. It carries out the reaction Release of the N-terminal residue from a tripeptide.. Cleaves the N-terminal amino acid of tripeptides. This Yersinia pseudotuberculosis serotype O:1b (strain IP 31758) protein is Peptidase T.